Consider the following 207-residue polypeptide: MRELTKRQSEIYNYIKQVVQTKGYPPSVREIGEAVGLASSSTVHGHLSRLEEKGYIRRDPTKPRAIEIVSDQTNDNINMEETIHVPVIGKVTAGVPITAVENIEEYFPLPEHLTSTHNSDIFILNVVGDSMIEAGILDGDKVIVRSQTIAENGDIIVAMTEEDEATVKRFYKEKNRYRLQPENSTMEPIYLDNVAVIGKVIGLYREM.

Residues 28–48 (VREIGEAVGLASSSTVHGHLS) constitute a DNA-binding region (H-T-H motif). Active-site for autocatalytic cleavage activity residues include Ser130 and Lys168.

The protein belongs to the peptidase S24 family. In terms of assembly, homodimer.

The catalysed reaction is Hydrolysis of Ala-|-Gly bond in repressor LexA.. Represses a number of genes involved in the response to DNA damage (SOS response), including recA and lexA. In the presence of single-stranded DNA, RecA interacts with LexA causing an autocatalytic cleavage which disrupts the DNA-binding part of LexA, leading to derepression of the SOS regulon and eventually DNA repair. This is LexA repressor from Staphylococcus aureus (strain MSSA476).